We begin with the raw amino-acid sequence, 453 residues long: Major fimbrium subunit FimC (453 aa).

The first 28 residues, 1–28, serve as a signal peptide directing secretion; sequence MKMKYFHHPSGLLPRLLLLLLLTMGAVA. The N-palmitoyl cysteine moiety is linked to residue C29. C29 carries S-diacylglycerol cysteine lipidation. Positions 29 to 56 are excised as a propeptide; the sequence is CTKEDNPDQPTSDEVATVKMSLDDVEMR.

This sequence belongs to the bacteroidetes fimbrillin superfamily. FimA/Mfa1 family. As to quaternary structure, fimbriae are composed of a major, structural subunit and the minor components FimC, FimD and FimE. Identified in a complex composed of FimC, FimD and FimE (in vitro). The complex interacts with host extracellular matrix proteins, including fibronectin and type I collagen. Interacts with host CXCR4.

The protein resides in the fimbrium. Its subcellular location is the cell outer membrane. In terms of biological role, minor component of fimbriae. These long, filamentous pili are attached to the cell surface; they mediate biofilm formation, adhesion onto host cells and onto other bacteria that are part of the oral microbiome. They play an important role in invasion of periodontal tissues and are major virulence factors. FimC, FimD and FimE contribute to interaction with host CXCR4 and thereby down-regulate the TLR2-mediated host immune response. The chain is Major fimbrium subunit FimC from Porphyromonas gingivalis (strain ATCC 33277 / DSM 20709 / CIP 103683 / JCM 12257 / NCTC 11834 / 2561).